We begin with the raw amino-acid sequence, 458 residues long: Transcription factor ORF10 (458 aa).

Residues 38–65 constitute a DNA-binding region (zn(2)-C6 fungal-type); the sequence is CESCRLKKLRCSGHKSGCDRCRSQAMKC. A disordered region spans residues 69-109; it reads IGAPSNSSRPKSRSHFQPNFSNMSGTAGTSKAPSPLGNDGV. The segment covering 71–100 has biased composition (polar residues); that stretch reads APSNSSRPKSRSHFQPNFSNMSGTAGTSKA.

The protein resides in the nucleus. Functionally, transcription factor that specifically regulates the expression of the gene cluster that mediates the biosynthesis of PR-toxin, a bicyclic sesquiterpene belonging to the eremophilane class and acting as a mycotoxin. The sequence is that of Transcription factor ORF10 from Penicillium roqueforti (strain FM164).